The primary structure comprises 361 residues: RNA-binding protein 4 (361 aa).

RRM domains are found at residues 2-72 (VKLF…ASKN) and 78-148 (TKLH…LSTS). A Glycyl lysine isopeptide (Lys-Gly) (interchain with G-Cter in SUMO2) cross-link involves residue lysine 79. Serine 86 is subject to Phosphoserine. The segment at 160-177 (SGCYRCGKEGHWSKECPI) adopts a CCHC-type zinc-finger fold. The segment at 196-361 (AVRTPYTMSY…YADRARYSAF (166 aa)) is interaction with TNPO3. Residue serine 306 is modified to Phosphoserine.

As to quaternary structure, interacts with TNPO3; the interaction mediates nuclear import of the protein and is disrupted by nuclear Ran bound to GTP. Interacts with EIF4G1 and WT1. Interacts with EIF4A1; the interaction is modulated under stress-induced conditions. Interacts with AGO1. Interacts with AGO2; the interaction occurs under both cell proliferation and differentiation conditions and in an RNA- and phosphorylation-independent manner. Interacts with DDX5; the interaction occurs in an RNA-independent manner. Interacts with RBPMS; the interaction allows cooperative assembly of RNA-bound stable cell-specific alternative splicing regulatory complexes. In terms of processing, phosphorylated. Phosphorylated in vitro on Ser-306 by SRPK1. Phosphorylation on Ser-306 is induced upon cell stress signaling, which alters its subcellular localization and may modulate its activity on IRES-mediated mRNA translation. Phosphorylated. Phosphorylation on Ser-306 is induced upon cell muscle differentiation. As to expression, expressed in the suprachiasmatic nucleus (SCN). Expressed in myocytes; expression gradually increases during muscle cell differentiation (at protein level). Expressed in the suprachiasmatic nucleus (SCN).

The protein resides in the nucleus. Its subcellular location is the nucleolus. It is found in the nucleus speckle. It localises to the cytoplasm. The protein localises to the cytoplasmic granule. In terms of biological role, RNA-binding factor involved in multiple aspects of cellular processes like alternative splicing of pre-mRNA and translation regulation. Modulates alternative 5'-splice site and exon selection. Acts as a muscle cell differentiation-promoting factor. Activates exon skipping of the PTB pre-mRNA during muscle cell differentiation. Antagonizes the activity of the splicing factor PTBP1 to modulate muscle cell-specific exon selection of alpha tropomyosin. Binds to intronic pyrimidine-rich sequence of the TPM1 and MAPT pre-mRNAs. Required for the translational activation of PER1 mRNA in response to circadian clock. Binds directly to the 3'-UTR of the PER1 mRNA. Exerts a suppressive activity on Cap-dependent translation via binding to CU-rich responsive elements within the 3'UTR of mRNAs, a process increased under stress conditions or during myocytes differentiation. Recruits EIF4A1 to stimulate IRES-dependent translation initiation in respons to cellular stress. Associates to internal ribosome entry segment (IRES) in target mRNA species under stress conditions. Plays a role for miRNA-guided RNA cleavage and translation suppression by promoting association of AGO2-containing miRNPs with their cognate target mRNAs. Associates with miRNAs during muscle cell differentiation. Binds preferentially to 5'-CGCGCG[GCA]-3' motif in vitro. This chain is RNA-binding protein 4 (Rbm4), found in Mus musculus (Mouse).